We begin with the raw amino-acid sequence, 249 residues long: Ditrans,polycis-undecaprenyl-diphosphate synthase ((2E,6E)-farnesyl-diphosphate specific) (249 aa).

The active site involves Asp26. Position 26 (Asp26) interacts with Mg(2+). Substrate-binding positions include 27 to 30, Trp31, Arg39, His43, and 71 to 73; these read GNGR and SRE. Asn74 functions as the Proton acceptor in the catalytic mechanism. Residues Trp75, Arg77, Arg194, and 200–202 each bind substrate; that span reads RIS. Glu213 serves as a coordination point for Mg(2+).

It belongs to the UPP synthase family. Homodimer. The cofactor is Mg(2+).

The enzyme catalyses 8 isopentenyl diphosphate + (2E,6E)-farnesyl diphosphate = di-trans,octa-cis-undecaprenyl diphosphate + 8 diphosphate. Catalyzes the sequential condensation of isopentenyl diphosphate (IPP) with (2E,6E)-farnesyl diphosphate (E,E-FPP) to yield (2Z,6Z,10Z,14Z,18Z,22Z,26Z,30Z,34E,38E)-undecaprenyl diphosphate (di-trans,octa-cis-UPP). UPP is the precursor of glycosyl carrier lipid in the biosynthesis of bacterial cell wall polysaccharide components such as peptidoglycan and lipopolysaccharide. This chain is Ditrans,polycis-undecaprenyl-diphosphate synthase ((2E,6E)-farnesyl-diphosphate specific), found in Buchnera aphidicola subsp. Schizaphis graminum (strain Sg).